Consider the following 350-residue polypeptide: Transmembrane protein 185B (350 aa).

7 consecutive transmembrane segments (helical) span residues 16 to 36, 41 to 61, 81 to 101, 111 to 131, 168 to 188, 211 to 231, and 240 to 260; these read LIYA…DGII, WAVF…ASVG, FKAM…EILV, FWLL…AACV, WLVV…VVLY, VTMA…EVLL, and TFSY…LMAT.

The protein belongs to the TMEM185 family.

The protein localises to the membrane. The chain is Transmembrane protein 185B (Tmem185b) from Mus musculus (Mouse).